The primary structure comprises 186 residues: Large ribosomal subunit protein eL15 (186 aa).

A disordered region spans residues 163–186 (RGLTSAGKKGRGLNKKGKGAEKVR). Positions 170–179 (KKGRGLNKKG) are enriched in basic residues.

It belongs to the eukaryotic ribosomal protein eL15 family.

The polypeptide is Large ribosomal subunit protein eL15 (Methanosphaera stadtmanae (strain ATCC 43021 / DSM 3091 / JCM 11832 / MCB-3)).